A 1598-amino-acid polypeptide reads, in one-letter code: Serine/threonine-protein kinase Nek1 (1598 aa).

Residues 106–380 (YEVIRQIGAG…ALQCLGYTIF (275 aa)) form the Protein kinase domain. Residues 112–120 (IGAGRFGEV) and lysine 135 each bind ATP. Aspartate 240 functions as the Proton acceptor in the catalytic mechanism.

This sequence belongs to the protein kinase superfamily. NEK Ser/Thr protein kinase family. NIMA subfamily.

It is found in the cytoplasm. It localises to the cytoskeleton. The protein resides in the microtubule organizing center. The protein localises to the centrosome. Its subcellular location is the spindle pole. It carries out the reaction L-seryl-[protein] + ATP = O-phospho-L-seryl-[protein] + ADP + H(+). The catalysed reaction is L-threonyl-[protein] + ATP = O-phospho-L-threonyl-[protein] + ADP + H(+). Phosphorylation status of the T-loop (amino acids 267-293) modulates kinase activity and subcellular localization of the protein. Functionally, probable serine/threonine-protein kinase. Involved in controlling centrosome splitting. Promotes separation of the centrosome outer cores. In Toxoplasma gondii (strain ATCC 50611 / Me49), this protein is Serine/threonine-protein kinase Nek1.